A 425-amino-acid chain; its full sequence is MRLSQYYLPTLKEKPAHARIISHQYSLRAGLIKQIASGIYTWLPLGLRVLKNIEGIIRDEMNKSGAIEALMPCVQPASLWRESGRYDDYGKTMLRIRDRHEEDMLFGPTHEEVATDLIRDIVKSYKNLPLCLYQIQWKFRDEVRPRYGVMRGREFLMKDAYSFNVNYESALNSYNLMYKTYIKIFKRMGLIPIGVRADTGLIGGNLSHEFHILASTGESTLYYDNKFFELLESEDVKSLKSIYAVADDIHDPKTCPVPQEQLNVSKGIEIGHIFYFGDKYSKPMNAKVTAQDGKNVNIHMGSYGIGVSRLVGAIIEAFHDDKGITWPEAVAPFRVGLINLQTKTAEYVEIANKIYSTLKSDEVLYDDTEGSIGVKFAKMDLIGLPWQIIVGKKAVSENIIEIKNRATGKVEEVQIEEAINYFNVK.

Belongs to the class-II aminoacyl-tRNA synthetase family. ProS type 2 subfamily. In terms of assembly, homodimer.

It is found in the cytoplasm. It carries out the reaction tRNA(Pro) + L-proline + ATP = L-prolyl-tRNA(Pro) + AMP + diphosphate. Functionally, catalyzes the attachment of proline to tRNA(Pro) in a two-step reaction: proline is first activated by ATP to form Pro-AMP and then transferred to the acceptor end of tRNA(Pro). In Wolbachia sp. subsp. Brugia malayi (strain TRS), this protein is Proline--tRNA ligase.